The following is a 313-amino-acid chain: Cytosolic Fe-S cluster assembly factor NUBP1 homolog (313 aa).

The interval 1–25 (MSDVPEDANAGCPGTGSAGAGKASG) is disordered. Cysteine 12, cysteine 26, cysteine 29, and cysteine 35 together coordinate [4Fe-4S] cluster. 66–73 (GKGGVGKS) lines the ATP pocket. [4Fe-4S] cluster is bound by residues cysteine 240 and cysteine 243.

This sequence belongs to the Mrp/NBP35 ATP-binding proteins family. NUBP1/NBP35 subfamily. Heterotetramer of 2 NUBP1 and 2 NUBP2 chains. Requires [4Fe-4S] cluster as cofactor.

The protein resides in the cytoplasm. Its subcellular location is the cell projection. In terms of biological role, component of the cytosolic iron-sulfur (Fe/S) protein assembly (CIA) machinery. Required for maturation of extramitochondrial Fe-S proteins. The NUBP1-NUBP2 heterotetramer forms a Fe-S scaffold complex, mediating the de novo assembly of an Fe-S cluster and its transfer to target apoproteins. Regulates cilium formation and structure. This Caenorhabditis briggsae protein is Cytosolic Fe-S cluster assembly factor NUBP1 homolog.